A 290-amino-acid polypeptide reads, in one-letter code: Lipoyl synthase (290 aa).

Cys-36, Cys-41, Cys-47, Cys-62, Cys-66, Cys-69, and Ser-275 together coordinate [4Fe-4S] cluster. Residues 48 to 264 (FSKKTATFMI…KEEALKIGFS (217 aa)) enclose the Radical SAM core domain.

This sequence belongs to the radical SAM superfamily. Lipoyl synthase family. [4Fe-4S] cluster serves as cofactor.

Its subcellular location is the cytoplasm. The enzyme catalyses [[Fe-S] cluster scaffold protein carrying a second [4Fe-4S](2+) cluster] + N(6)-octanoyl-L-lysyl-[protein] + 2 oxidized [2Fe-2S]-[ferredoxin] + 2 S-adenosyl-L-methionine + 4 H(+) = [[Fe-S] cluster scaffold protein] + N(6)-[(R)-dihydrolipoyl]-L-lysyl-[protein] + 4 Fe(3+) + 2 hydrogen sulfide + 2 5'-deoxyadenosine + 2 L-methionine + 2 reduced [2Fe-2S]-[ferredoxin]. It functions in the pathway protein modification; protein lipoylation via endogenous pathway; protein N(6)-(lipoyl)lysine from octanoyl-[acyl-carrier-protein]: step 2/2. Catalyzes the radical-mediated insertion of two sulfur atoms into the C-6 and C-8 positions of the octanoyl moiety bound to the lipoyl domains of lipoate-dependent enzymes, thereby converting the octanoylated domains into lipoylated derivatives. The chain is Lipoyl synthase from Alkaliphilus metalliredigens (strain QYMF).